Reading from the N-terminus, the 139-residue chain is Actin-depolymerizing factor 1 (139 aa).

The region spanning Ala5–Asn139 is the ADF-H domain.

Belongs to the actin-binding proteins ADF family.

In terms of biological role, actin-depolymerizing protein. Severs actin filaments (F-actin) and binds to actin monomers. This chain is Actin-depolymerizing factor 1 (ADF1), found in Petunia hybrida (Petunia).